A 658-amino-acid polypeptide reads, in one-letter code: MFQNNPLLAQLKQQIEANKEYVEGTVKASDKAFGFLECDKKSYFIPPMEMKKVMHGDKVKAVVKREDDKEQVEIDSLLEPMLDRFIAQVRFNKDNKLQLIVDHPSIKNIIPANTHKKVTETLESGDWVVAQLKTHPLRDDRFLFAQVTQFICKADDNFAPWWVTLARHEQPREPVANEKSYELHDELDREDLTSLYFTTIDSPSTQDMDDALYIEPIKQGEVQTGWRLVVAIADPTAYIPENSNLEKAARQRCFTNYLPGFNIPMLPRELSDDLCSLVPNKKRPALVGYIETDLAGNITGDTRFVSAWVESKAKLAYDNVSDYLEQVENAWQPESAETKQQIDWLHQFTLARIEWRRNNALLFKESGDYSFELNEDGSVRDIHVEYRRIANQMIEESMIIANICCAKFLADNAKTGVFNTHAGFDPKNLELAQKFLLDTLSTDENRDALTAFYAPEKLATLEGYCEMRRSIDEFPEKFLELRLRRYLTFAEFKSEVAPHLGLGISHYATWTSPIRKYGDMVNHRLIKQVLLGKQAKTVEEGILVRLQEARRQNRLVERDIADWLYARYLFPMVEQAVEFDCEIADVSRGGVRAKVIANGAQIFVPFSTLHDKKEEMEFRPEEIALYIKGEKAYQIGQAVKVKLTEVRLETRSIVGNII.

In terms of domain architecture, RNB spans 189–530 (REDLTSLYFT…VNHRLIKQVL (342 aa)). One can recognise an S1 motif domain in the interval 576–658 (AVEFDCEIAD…ETRSIVGNII (83 aa)).

It belongs to the RNR ribonuclease family. RNase II subfamily.

Its subcellular location is the cytoplasm. The catalysed reaction is Exonucleolytic cleavage in the 3'- to 5'-direction to yield nucleoside 5'-phosphates.. In terms of biological role, involved in mRNA degradation. Hydrolyzes single-stranded polyribonucleotides processively in the 3' to 5' direction. This chain is Exoribonuclease 2, found in Actinobacillus pleuropneumoniae serotype 5b (strain L20).